A 733-amino-acid polypeptide reads, in one-letter code: Tudor domain-containing protein 3 (733 aa).

The tract at residues 241–281 is disordered; it reads TRTFGGGGNAGGNLANPGSSYKSRDTYQRKREEREKPWTEN. Over residues 262–281 the composition is skewed to basic and acidic residues; the sequence is KSRDTYQRKREEREKPWTEN. The 41-residue stretch at 290 to 330 folds into the UBA domain; the sequence is LVDERALRDIMEMGFNREAARQALLDNNNNLEVALNLLLTR. A disordered region spans residues 333-630; that stretch reads QPRAAPVEQS…RSGPIKGPRD (298 aa). The span at 346–355 shows a compositional bias: basic residues; it reads PRGKGRGKGR. The span at 392–408 shows a compositional bias: polar residues; the sequence is PSQQDHQTKMNFSNSDQ. Residues 420 to 441 are compositionally biased toward basic and acidic residues; that stretch reads PRNDGRSQRNDRPPRFQKDGDF. A compositionally biased stretch (polar residues) spans 446–455; that stretch reads PASSSFSQPQ. A compositionally biased stretch (basic and acidic residues) spans 456–478; sequence KWRDGERTGRGGGPERWKNESQD. Residues 484-499 are compositionally biased toward polar residues; the sequence is VSYSSSFSKSREQQGA. The segment covering 559–570 has biased composition (basic and acidic residues); sequence HSQDALGKKDFQ. The Tudor domain occupies 639–699; that stretch reads NWKAGDQCLA…KPLHMDDDED (61 aa). Basic and acidic residues predominate over residues 706–716; that stretch reads LEFRRGGDGQP. Residues 706-733 are disordered; the sequence is LEFRRGGDGQPRRSRPTQQYYQPPRARD.

Component of mRNA stress granules.

It localises to the cytoplasm. Its subcellular location is the nucleus. Scaffolding protein that specifically recognizes and binds dimethylarginine-containing proteins. Plays a role in the regulation of translation of target mRNAs by binding Arg/Gly-rich motifs (GAR) in dimethylarginine-containing proteins. In nucleus, acts as a coactivator: recognizes and binds asymmetric dimethylation on the core histone tails associated with transcriptional activation (H3R17me2a and H4R3me2a) and recruits proteins at these arginine-methylated loci. In cytoplasm, acts as an antiviral factor that participates in the assembly of stress granules together with G3BP1. The sequence is that of Tudor domain-containing protein 3 (tdrd3) from Danio rerio (Zebrafish).